The primary structure comprises 257 residues: Thiazole synthase (257 aa).

Lys100 functions as the Schiff-base intermediate with DXP in the catalytic mechanism. 1-deoxy-D-xylulose 5-phosphate is bound by residues Gly161, 187–188 (AG), and 209–210 (NT).

This sequence belongs to the ThiG family. In terms of assembly, homotetramer. Forms heterodimers with either ThiH or ThiS.

Its subcellular location is the cytoplasm. The enzyme catalyses [ThiS sulfur-carrier protein]-C-terminal-Gly-aminoethanethioate + 2-iminoacetate + 1-deoxy-D-xylulose 5-phosphate = [ThiS sulfur-carrier protein]-C-terminal Gly-Gly + 2-[(2R,5Z)-2-carboxy-4-methylthiazol-5(2H)-ylidene]ethyl phosphate + 2 H2O + H(+). It participates in cofactor biosynthesis; thiamine diphosphate biosynthesis. In terms of biological role, catalyzes the rearrangement of 1-deoxy-D-xylulose 5-phosphate (DXP) to produce the thiazole phosphate moiety of thiamine. Sulfur is provided by the thiocarboxylate moiety of the carrier protein ThiS. In vitro, sulfur can be provided by H(2)S. The sequence is that of Thiazole synthase from Zymomonas mobilis subsp. mobilis (strain ATCC 31821 / ZM4 / CP4).